A 44-amino-acid polypeptide reads, in one-letter code: Cytochrome b559 subunit beta (44 aa).

Residues tryptophan 19 to alanine 35 traverse the membrane as a helical segment. Position 23 (histidine 23) interacts with heme.

It belongs to the PsbE/PsbF family. Heterodimer of an alpha subunit and a beta subunit. PSII is composed of 1 copy each of membrane proteins PsbA, PsbB, PsbC, PsbD, PsbE, PsbF, PsbH, PsbI, PsbJ, PsbK, PsbL, PsbM, PsbT, PsbX, PsbY, PsbZ, Psb30/Ycf12, at least 3 peripheral proteins of the oxygen-evolving complex and a large number of cofactors. It forms dimeric complexes. The cofactor is heme b.

It is found in the plastid. The protein resides in the chloroplast thylakoid membrane. Its function is as follows. This b-type cytochrome is tightly associated with the reaction center of photosystem II (PSII). PSII is a light-driven water:plastoquinone oxidoreductase that uses light energy to abstract electrons from H(2)O, generating O(2) and a proton gradient subsequently used for ATP formation. It consists of a core antenna complex that captures photons, and an electron transfer chain that converts photonic excitation into a charge separation. The polypeptide is Cytochrome b559 subunit beta (Chlamydomonas reinhardtii (Chlamydomonas smithii)).